The following is a 299-amino-acid chain: MNNIIDGKKLAEKIIMKVKAETTKLRNNYKIQPGIAVIIVGNDPASQVYVTSKSKKAEECGFFSIKHMISKETQEKELLHLIATLNSDPQIHGILVQLPLPDHINTNRITQAIAFQKDVDGFHYINIGKLAANALEDAIIPCTPAGAMMMIEQQCGQDLSGLDAVVVGRSNIVGKPMAALLTAANATVTIAHSRTRDLDDVCRSADILVTAIGRPQMIKKDWVKNGAIIIDVGINRIAAPEKGVGKTRLVGDVDFEEIKEKAAAITPVPGGVGPMTIAMLMVNTLKAAARLHNLPIPKF.

NADP(+) is bound by residues 168-170 (GRS), S193, and I234.

This sequence belongs to the tetrahydrofolate dehydrogenase/cyclohydrolase family. In terms of assembly, homodimer.

It carries out the reaction (6R)-5,10-methylene-5,6,7,8-tetrahydrofolate + NADP(+) = (6R)-5,10-methenyltetrahydrofolate + NADPH. The enzyme catalyses (6R)-5,10-methenyltetrahydrofolate + H2O = (6R)-10-formyltetrahydrofolate + H(+). The protein operates within one-carbon metabolism; tetrahydrofolate interconversion. Functionally, catalyzes the oxidation of 5,10-methylenetetrahydrofolate to 5,10-methenyltetrahydrofolate and then the hydrolysis of 5,10-methenyltetrahydrofolate to 10-formyltetrahydrofolate. The polypeptide is Bifunctional protein FolD (Bartonella henselae (strain ATCC 49882 / DSM 28221 / CCUG 30454 / Houston 1) (Rochalimaea henselae)).